Reading from the N-terminus, the 178-residue chain is Large ribosomal subunit protein uL6 (178 aa).

This sequence belongs to the universal ribosomal protein uL6 family. Part of the 50S ribosomal subunit.

This protein binds to the 23S rRNA, and is important in its secondary structure. It is located near the subunit interface in the base of the L7/L12 stalk, and near the tRNA binding site of the peptidyltransferase center. This chain is Large ribosomal subunit protein uL6, found in Methanobrevibacter smithii (strain ATCC 35061 / DSM 861 / OCM 144 / PS).